The sequence spans 545 residues: Cytochrome P450 monooxygenase sdnB (545 aa).

N-linked (GlcNAc...) asparagine glycosylation occurs at Asn5. A helical membrane pass occupies residues 30–50 (SILALTPLQGIALFLCLFWGY). Residue Asn276 is glycosylated (N-linked (GlcNAc...) asparagine). A helical transmembrane segment spans residues 322-342 (LPILILIILVPAAHTTAMGIS). 2 N-linked (GlcNAc...) asparagine glycosylation sites follow: Asn393 and Asn476. Cys486 contacts heme.

The protein belongs to the cytochrome P450 family. The cofactor is heme.

Its subcellular location is the membrane. It participates in antibiotic biosynthesis. In terms of biological role, cytochrome P450 monooxygenase; part of the gene cluster that mediates the biosynthesis of sordarin and hypoxysordarin, glycoside antibiotics with a unique tetracyclic diterpene aglycone structure. First, the geranylgeranyl diphosphate synthase sdnC constructs GGDP from farnesyl diphosphate and isopentenyl diphosphate. The diterpene cyclase sdnA then catalyzes the cyclization of GGDP to afford cycloaraneosene. Cycloaraneosene is then hydroxylated four times by the putative cytochrome P450 monooxygenases sdnB, sdnE, sdnF and sdnH to give a hydroxylated cycloaraneosene derivative such as cycloaraneosene-8,9,13,19-tetraol. Although the order of the hydroxylations is unclear, at least C8, C9 and C13 of the cycloaraneosene skeleton are hydroxylated before the sordaricin formation. Dehydration of the 13-hydroxy group of the hydroxylated cycloaraneosene derivative might be catalyzed by an unassigned hypothetical protein such as sdnG and sdnP to construct the cyclopentadiene moiety. The FAD-dependent oxidoreductase sdnN is proposed to catalyze the oxidation at C9 of the hydroxylated cycloaraneosene derivative and also catalyze the Baeyer-Villiger oxidation to give the lactone intermediate. The presumed lactone intermediate would be hydrolyzed to give an acrolein moiety and a carboxylate moiety. Then, [4+2]cycloaddition would occur between the acrolein moiety and the cyclopentadiene moiety to give sordaricin. SdnN might also be involved in the [4+2]cycloaddition after the hypothesized oxidation to accommodate the oxidized product and prompt the [4+2]cycloaddition. GDP-6-deoxy-D-altrose may be biosynthesized from GDP-D-mannose by the putative GDP-mannose-4,6-dehydratase sdnI and the short-chain dehydrogenase sdnK. The glycosyltransferase sdnJ catalyzes the attachment of 6-deoxy-D-altrose onto the 19-hydroxy group of sordaricin to give 4'-O-demethylsordarin. The methyltransferase sdnD would complete the biosynthesis of sordarin. Sordarin can be further modified into hypoxysordarin. The unique acyl chain at the 3'-hydroxy group of hypoxysordarin would be constructed by an iterative type I PKS sdnO and the trans-acting polyketide methyltransferase sdnL. SdnL would be responsible for the introduction of an alpha-methyl group of the polyketide chain. Alternatively, the beta-lactamase-like protein sdnR might be responsible for the cleavage and transfer of the polyketide chain from the PKS sdnO to sordarin. Two putative cytochrome P450 monooxygenases, sdnQ and sdnT, might catalyze the epoxidations of the polyketide chain to complete the biosynthesis of hypoxysordarin. Transcriptional regulators sdnM and sdnS are presumably encoded for the transcriptional regulation of the expression of the sdn gene cluster. The sequence is that of Cytochrome P450 monooxygenase sdnB from Sordaria araneosa (Pleurage araneosa).